A 250-amino-acid chain; its full sequence is Leucyl/phenylalanyl-tRNA--protein transferase (250 aa).

Belongs to the L/F-transferase family.

The protein resides in the cytoplasm. It carries out the reaction N-terminal L-lysyl-[protein] + L-leucyl-tRNA(Leu) = N-terminal L-leucyl-L-lysyl-[protein] + tRNA(Leu) + H(+). It catalyses the reaction N-terminal L-arginyl-[protein] + L-leucyl-tRNA(Leu) = N-terminal L-leucyl-L-arginyl-[protein] + tRNA(Leu) + H(+). The catalysed reaction is L-phenylalanyl-tRNA(Phe) + an N-terminal L-alpha-aminoacyl-[protein] = an N-terminal L-phenylalanyl-L-alpha-aminoacyl-[protein] + tRNA(Phe). Its function is as follows. Functions in the N-end rule pathway of protein degradation where it conjugates Leu, Phe and, less efficiently, Met from aminoacyl-tRNAs to the N-termini of proteins containing an N-terminal arginine or lysine. The sequence is that of Leucyl/phenylalanyl-tRNA--protein transferase from Cupriavidus taiwanensis (strain DSM 17343 / BCRC 17206 / CCUG 44338 / CIP 107171 / LMG 19424 / R1) (Ralstonia taiwanensis (strain LMG 19424)).